The sequence spans 170 residues: Co-chaperone protein HscB homolog (170 aa).

Residues 5-79 (DHFSLFGLPT…RARYLCEQAG (75 aa)) enclose the J domain.

Belongs to the HscB family. As to quaternary structure, interacts with HscA and stimulates its ATPase activity.

Its function is as follows. Co-chaperone involved in the maturation of iron-sulfur cluster-containing proteins. Seems to help targeting proteins to be folded toward HscA. The sequence is that of Co-chaperone protein HscB homolog from Bordetella bronchiseptica (strain ATCC BAA-588 / NCTC 13252 / RB50) (Alcaligenes bronchisepticus).